The primary structure comprises 327 residues: Phenylalanine--tRNA ligase alpha subunit (327 aa).

E252 contacts Mg(2+).

The protein belongs to the class-II aminoacyl-tRNA synthetase family. Phe-tRNA synthetase alpha subunit type 1 subfamily. As to quaternary structure, tetramer of two alpha and two beta subunits. Requires Mg(2+) as cofactor.

The protein localises to the cytoplasm. It carries out the reaction tRNA(Phe) + L-phenylalanine + ATP = L-phenylalanyl-tRNA(Phe) + AMP + diphosphate + H(+). This chain is Phenylalanine--tRNA ligase alpha subunit, found in Salmonella choleraesuis (strain SC-B67).